The primary structure comprises 427 residues: Methylthioribose kinase 2 (427 aa).

ATP contacts are provided by residues 49-53 (DGNLN), lysine 68, and 122-124 (RYI). Position 51 (asparagine 51) interacts with substrate. Position 243 (aspartate 243) interacts with substrate. ATP is bound at residue 260 to 262 (DPE). Arginine 370 serves as a coordination point for substrate.

Belongs to the methylthioribose kinase family. In terms of assembly, homodimer.

The enzyme catalyses 5-(methylsulfanyl)-D-ribose + ATP = 5-(methylsulfanyl)-alpha-D-ribose 1-phosphate + ADP + H(+). It participates in amino-acid biosynthesis; L-methionine biosynthesis via salvage pathway; S-methyl-5-thio-alpha-D-ribose 1-phosphate from S-methyl-5'-thioadenosine (hydrolase route): step 2/2. Catalyzes the phosphorylation of methylthioribose into methylthioribose-1-phosphate. This chain is Methylthioribose kinase 2 (MTK2), found in Oryza sativa subsp. japonica (Rice).